Here is a 233-residue protein sequence, read N- to C-terminus: Lactate utilization protein C (233 aa).

This sequence belongs to the LutC/YkgG family.

Its function is as follows. Is involved in L-lactate degradation and allows cells to grow with lactate as the sole carbon source. The protein is Lactate utilization protein C of Oceanobacillus iheyensis (strain DSM 14371 / CIP 107618 / JCM 11309 / KCTC 3954 / HTE831).